Here is a 339-residue protein sequence, read N- to C-terminus: Ureidoglycine carbamoyltransferase (339 aa).

The protein belongs to the aspartate/ornithine carbamoyltransferase superfamily. Homodimer.

The enzyme catalyses (S)-2-ureidoglycine + carbamoyl phosphate = allantoate + phosphate + H(+). It functions in the pathway purine metabolism. Catalyzes the phosphorolysis of allantoate to ureidoglycine and carbamoyl phosphate. Is likely involved in a purine degradation pathway. This Rubrobacter xylanophilus (strain DSM 9941 / JCM 11954 / NBRC 16129 / PRD-1) protein is Ureidoglycine carbamoyltransferase.